The chain runs to 645 residues: Translation factor GUF1 homolog, mitochondrial (645 aa).

The tr-type G domain maps to 40–215 (EKIRNFGIVA…AIVERVPAPT (176 aa)). Residues 49–56 (AHVDHGKS), 108–112 (DTPGH), and 162–165 (NKID) contribute to the GTP site.

Belongs to the TRAFAC class translation factor GTPase superfamily. Classic translation factor GTPase family. LepA subfamily.

It localises to the mitochondrion inner membrane. It carries out the reaction GTP + H2O = GDP + phosphate + H(+). Promotes mitochondrial protein synthesis. May act as a fidelity factor of the translation reaction, by catalyzing a one-codon backward translocation of tRNAs on improperly translocated ribosomes. Binds to mitochondrial ribosomes in a GTP-dependent manner. The chain is Translation factor GUF1 homolog, mitochondrial from Caenorhabditis briggsae.